The chain runs to 204 residues: MGAYKYMQELWRKKQSDVMRFLLRVRCWQYRQLSALHRAPRPTRPDKARRLGYKAKQGYVIYRIRVRRGGRKRPVPKGATYGKPVHHGVNQIKFARSLQSVAEERAGRHCGGLRVLSSYWVGEDSTYKFFEVVLVDTFHKAIRRNPDTQWITKAVHKHREMRGLTSAGKKSRGLGKGHKFHLTIGGSRRAAWKRRNTLQLHRYR.

Belongs to the eukaryotic ribosomal protein eL15 family. As to quaternary structure, component of the large ribosomal subunit.

It localises to the cytoplasm. Its function is as follows. Component of the large ribosomal subunit. The ribosome is a large ribonucleoprotein complex responsible for the synthesis of proteins in the cell. This Carassius auratus (Goldfish) protein is Large ribosomal subunit protein eL15 (rpl15).